A 333-amino-acid polypeptide reads, in one-letter code: Potassium channel protein 1 (333 aa).

The Cytoplasmic segment spans residues 1 to 6 (METYEK). Residues 7–27 (IELGIIVIILLILIESVILMT) form a helical membrane-spanning segment. Residues 28–60 (VEGWDFFTAFYTAVVTISTVGYGDYTPQTFLGK) are Extracellular-facing. Residues 46–51 (TVGYGD) carry the Selectivity filter motif. A helical membrane pass occupies residues 61–81 (LSVIIYIFAGVGAVAYTMGNI). Over 82–333 (ASFFIEGHFR…KLKRYVEGVE (252 aa)) the chain is Cytoplasmic. Residues 107-229 (NNHYIICGYG…GADRAVCPYI (123 aa)) form the RCK N-terminal domain. The region spanning 246–331 (EFIHSLVATE…LEKLKRYVEG (86 aa)) is the RCK C-terminal domain.

In terms of assembly, homotetramer.

It is found in the cell membrane. Potassium channel protein. Seems to conduct potassium at low membrane potentials. The chain is Potassium channel protein 1 from Methanocaldococcus jannaschii (strain ATCC 43067 / DSM 2661 / JAL-1 / JCM 10045 / NBRC 100440) (Methanococcus jannaschii).